Consider the following 186-residue polypeptide: Signal peptidase I P (186 aa).

At 1 to 15 (MTKEKVFKKKSSILE) the chain is on the cytoplasmic side. A helical transmembrane segment spans residues 16–35 (WGKAIVIAVILALLIRNFLF). The Extracellular portion of the chain corresponds to 36–186 (EPYVVEGKSM…FPFSNMRKAK (151 aa)). Catalysis depends on residues Ser-44 and Lys-86.

This sequence belongs to the peptidase S26 family.

It localises to the cell membrane. It catalyses the reaction Cleavage of hydrophobic, N-terminal signal or leader sequences from secreted and periplasmic proteins.. This Bacillus subtilis subsp. natto protein is Signal peptidase I P (sipP).